Here is a 72-residue protein sequence, read N- to C-terminus: UPF0270 protein YheU (72 aa).

This sequence belongs to the UPF0270 family.

In Escherichia fergusonii (strain ATCC 35469 / DSM 13698 / CCUG 18766 / IAM 14443 / JCM 21226 / LMG 7866 / NBRC 102419 / NCTC 12128 / CDC 0568-73), this protein is UPF0270 protein YheU.